The primary structure comprises 29 residues: Conotoxin pr6a (29 aa).

3 disulfides stabilise this stretch: Cys2–Cys20, Cys9–Cys24, and Cys19–Cys28.

In terms of tissue distribution, expressed by the venom duct.

It localises to the secreted. Functionally, intraperitoneal injection into fish (1 nmol) provokes hyperactivity and erratic swimming in various directions after 14 minutes. The chain is Conotoxin pr6a from Conus parius (Cone snail).